Here is a 218-residue protein sequence, read N- to C-terminus: MSLHHIANRTKKLPPLRVGIGGPVGSGKTTLLEMLCKAMKDKYDLVAITNDIYTKEDQRLLTVSGALDAERIMGVETGGCPHTAIREDASINLEAIDRMLVEFPDADVVFIESGGDNLAATFSPELSDLTIYVIDVAAGEKIPRKGGPGITKSDLFVINKTDLAPYVGADLGVMQLDTIRMRTTAKGLKPFVMTNLKTNTGLAEVVAFIETKGMLQPA.

22–29 (GPVGSGKT) contacts GTP.

It belongs to the SIMIBI class G3E GTPase family. UreG subfamily. Homodimer. UreD, UreF and UreG form a complex that acts as a GTP-hydrolysis-dependent molecular chaperone, activating the urease apoprotein by helping to assemble the nickel containing metallocenter of UreC. The UreE protein probably delivers the nickel.

It localises to the cytoplasm. In terms of biological role, facilitates the functional incorporation of the urease nickel metallocenter. This process requires GTP hydrolysis, probably effectuated by UreG. This chain is Urease accessory protein UreG, found in Polaromonas naphthalenivorans (strain CJ2).